Consider the following 475-residue polypeptide: Ribulose bisphosphate carboxylase large chain (475 aa).

A propeptide spanning residues 1-2 is cleaved from the precursor; that stretch reads MS. Proline 3 is subject to N-acetylproline. Position 14 is an N6,N6,N6-trimethyllysine (lysine 14). Substrate contacts are provided by asparagine 123 and threonine 173. The active-site Proton acceptor is lysine 175. Residue lysine 177 participates in substrate binding. 3 residues coordinate Mg(2+): lysine 201, aspartate 203, and glutamate 204. Position 201 is an N6-carboxylysine (lysine 201). The active-site Proton acceptor is the histidine 294. Substrate contacts are provided by arginine 295, histidine 327, and serine 379.

This sequence belongs to the RuBisCO large chain family. Type I subfamily. In terms of assembly, heterohexadecamer of 8 large chains and 8 small chains; disulfide-linked. The disulfide link is formed within the large subunit homodimers. Requires Mg(2+) as cofactor. The disulfide bond which can form in the large chain dimeric partners within the hexadecamer appears to be associated with oxidative stress and protein turnover.

It localises to the plastid. Its subcellular location is the chloroplast. The catalysed reaction is 2 (2R)-3-phosphoglycerate + 2 H(+) = D-ribulose 1,5-bisphosphate + CO2 + H2O. The enzyme catalyses D-ribulose 1,5-bisphosphate + O2 = 2-phosphoglycolate + (2R)-3-phosphoglycerate + 2 H(+). Functionally, ruBisCO catalyzes two reactions: the carboxylation of D-ribulose 1,5-bisphosphate, the primary event in carbon dioxide fixation, as well as the oxidative fragmentation of the pentose substrate in the photorespiration process. Both reactions occur simultaneously and in competition at the same active site. In Citrus sinensis (Sweet orange), this protein is Ribulose bisphosphate carboxylase large chain.